The following is a 640-amino-acid chain: Probable inactive receptor kinase At3g08680 (640 aa).

The N-terminal stretch at 1-22 (MMKIIAAFLFLLVTTFVSRCLS) is a signal peptide. 5 LRR repeats span residues 93 to 115 (ALRI…ILSL), 117 to 138 (FIRS…VLSH), 139 to 162 (RLVN…QNLT), 163 to 185 (QLTD…PPRL), and 186 to 206 (KYLN…VKSF). The segment at 222 to 249 (LTPCPENTTAPSPSPTTPTEGPGTTNIG) is disordered. Low complexity predominate over residues 226-247 (PENTTAPSPSPTTPTEGPGTTN). The chain crosses the membrane as a helical span at residues 260 to 280 (GAIVGIAVGGSVLLFIILAII). A disordered region spans residues 289–315 (DGGQDSTAVPKAKPGRSDNKAEEFGSG). The 274-residue stretch at 341–614 (RASAEVLGKG…EEVVNMMEEI (274 aa)) folds into the Protein kinase domain. Ser-343 is modified (phosphoserine). 347-355 (LGKGSYGTT) is a binding site for ATP. Thr-364 is modified (phosphothreonine). Position 369 (Lys-369) interacts with ATP. A phosphothreonine mark is found at Thr-441, Thr-514, and Thr-564. The interval 612 to 640 (EEIRPSGSGPGSGNRASSPEMIRSSDSPV) is disordered.

This sequence belongs to the protein kinase superfamily. Tyr protein kinase family.

The protein localises to the membrane. The chain is Probable inactive receptor kinase At3g08680 from Arabidopsis thaliana (Mouse-ear cress).